We begin with the raw amino-acid sequence, 542 residues long: MLSSVLFPAMRTLLLLKYVFSLISLSAICCQTVSAIPVVSREGLPMTLSDKCAEALISDVACDPNVLDFKPGYYYSPEILQRACTDTCKSALDSYLDRVKSSCGTETIVGPFDLEVSALIVPGMRKDLFQKTCLQDNGRYCNNVAATAAVIADPGVSRFNYLSSVPPGTVPPDPCDIQHVCLYVDDQSMRNIWATIDYYSYWVLYIINAGCYNMHRLNGTELCISAPGQKFVPGDATDLPGATVTTPVPAPSDAASGSNRYCGRWYGVKKGDYCNLIVLKFGITMDNFIFLNPALNSNCTNLYAEESYCVLPVGDINTYSGKPGYVSTPTGSETTATGIRFEDLPDATENPYPRPPPGPPIAEGTRDDCNYYFDGAEFQYNVTNTYWNSNCQIPPPQVYRVDPESFESWNAGLGNISRPECSFKPGFRYCGRYYALSDDSDEPTPTTPITTSDDPTSTSATPTTPTTSSKPSPGAPTMTGQPSACNKWHTVTNGESCTVIPKTFGITLEQFLAWNPTVKSDCTENFWAGYAYCVGVKTLGPS.

Residues 1 to 35 (MLSSVLFPAMRTLLLLKYVFSLISLSAICCQTVSA) form the signal peptide. N-linked (GlcNAc...) asparagine glycans are attached at residues asparagine 218, asparagine 298, asparagine 381, and asparagine 415. In terms of domain architecture, LysM 1 spans 264–310 (RWYGVKKGDYCNLIVLKFGITMDNFIFLNPALNSNCTNLYAEESYCV). Residues 439–484 (DSDEPTPTTPITTSDDPTSTSATPTTPTTSSKPSPGAPTMTGQPSA) form a disordered region. The span at 443 to 472 (PTPTTPITTSDDPTSTSATPTTPTTSSKPS) shows a compositional bias: low complexity. The LysM 2 domain occupies 487–534 (KWHTVTNGESCTVIPKTFGITLEQFLAWNPTVKSDCTENFWAGYAYCV).

The protein resides in the secreted. Might have a role in sequestration of chitin oligosaccharides (breakdown products of fungal cell walls that are released during invasion and act as triggers of host immunity) to dampen host defense. The chain is LysM domain-containing protein ARB_00327 from Arthroderma benhamiae (strain ATCC MYA-4681 / CBS 112371) (Trichophyton mentagrophytes).